We begin with the raw amino-acid sequence, 281 residues long: Fructose-bisphosphate aldolase class 1 (281 aa).

The active-site Schiff-base intermediate with dihydroxyacetone-P is the K191.

This sequence belongs to the DeoC/FbaB aldolase family. Homooctamer.

The protein localises to the cytoplasm. The enzyme catalyses beta-D-fructose 1,6-bisphosphate = D-glyceraldehyde 3-phosphate + dihydroxyacetone phosphate. Its activity is regulated as follows. Activated by citrate. The sequence is that of Fructose-bisphosphate aldolase class 1 (fba) from Pyrococcus abyssi (strain GE5 / Orsay).